The chain runs to 264 residues: Cercarial protease (264 aa).

The signal sequence occupies residues 1-19 (MSNRWRFVVVVTLFTYCLT). A propeptide spanning residues 20–27 (FERVSTWL) is cleaved from the precursor. The region spanning 28 to 264 (IRSGEPVQHP…RMLDFVRSNI (237 aa)) is the Peptidase S1 domain. A disulfide bridge links C53 with C69. Active-site charge relay system residues include H68 and D126. Cysteines 192 and 202 form a disulfide. S218 (charge relay system) is an active-site residue.

Belongs to the peptidase S1 family. Acetabular (penetration) glands.

Its activity is regulated as follows. Activated by an autocatalytic mechanism. In terms of biological role, this protease cleaves elastin and thus facilitates penetration of schistosome parasite larvae through elastin-rich tissue of the host. The polypeptide is Cercarial protease (Schistosoma mansoni (Blood fluke)).